Here is a 723-residue protein sequence, read N- to C-terminus: Ribosome quality control complex subunit 1 (723 aa).

The disordered stretch occupies residues serine 21–aspartate 125. Over residues lysine 27–asparagine 37 the composition is skewed to polar residues. Residues serine 93–asparagine 108 show a composition bias toward basic residues. Residues histidine 109–glycine 118 show a composition bias toward basic and acidic residues. Phosphoserine is present on serine 119. Threonine 158 bears the Phosphothreonine mark. Serine 160 is modified (phosphoserine).

Belongs to the TCF25 family. As to quaternary structure, component of the ribosome quality control complex (RQC), composed of the E3 ubiquitin ligase RKR1/LTN1, RQC1 and RQC2, as well as CDC48 and its ubiquitin-binding cofactors. RQC forms a stable complex with 60S ribosomal subunits.

The protein localises to the cytoplasm. In terms of biological role, component of the ribosome quality control complex (RQC), a ribosome-associated complex that mediates ubiquitination and extraction of incompletely synthesized nascent chains for proteasomal degradation. Within the RQC complex, RQC1 is essential for the recruitment of CDC48 to incompletely synthesized nascent polypeptides that are ubiquitinated by RKR1/LTN1. This is Ribosome quality control complex subunit 1 from Saccharomyces cerevisiae (strain ATCC 204508 / S288c) (Baker's yeast).